Consider the following 848-residue polypeptide: MVDWLSLLPWNKIFTAACGCFLSDSNYIHLMESNLDALQKTMEELKNGRDDLLARVSIEEDKGLQRLALVNGWLSRVQIVESEFKDLLEAMSIETGRLCLFGYCSEDCISSYNYGGKVMKNLEEVKELLSKKNFEVVAQKIIPKAEKKHIQTTVGLDTMVGIAWESLIDDEIRTLGLYGMGGIGKTTLLESLNNKFVELESEFDVVIWVVVSKDFQLEGIQDQILGRLRPDKEWERETESKKASLINNNLKRKKFVLLLDDLWSEVDLIKIGVPPPSRENGSKIVFTTRSKEVCKHMKADKQIKVDCLSPDEAWELFRLTVGDIILRSHQDIPALARIVAAKCHGLPLALNVIGKAMVCKETVQEWRHAINVLNSPGHKFPGMEERILPILKFSYDSLKNGEIKLCFLYCSLFPEDFEIEKDKLIEYWICEGYINPNRYEDGGTNQGYDIIGLLVRAHLLIECELTDKVKMHDVIREMALWINSDFGNQQETICVKSGAHVRLIPNDISWEIVRQMSLISTQVEKIACSPNCPNLSTLLLPYNKLVDISVGFFLFMPKLVVLDLSTNWSLIELPEEISNLGSLQYLNLSLTGIKSLPVGLKKLRKLIYLNLEFTNVLESLVGIATTLPNLQVLKLFYSLFCVDDIIMEELQRLKHLKILTATIEDAMILERVQGVDRLASSIRGLCLRNMSAPRVILNSVALGGLQQLGIVSCNISEIEIDWLSKERRDHRSTSSPGFKQLASITVIGLVGPRDLSWLLFAQNLKDIQVQYSPTIEEIINKQKGMSITKVHRDIVVPFGKLESLHLYQLAELTEICWNYQTLPNLRESYVNYCPKLLEDIANFPKLKG.

A coiled-coil region spans residues 25 to 62; the sequence is SNYIHLMESNLDALQKTMEELKNGRDDLLARVSIEEDK. The NB-ARC domain maps to 137–439; it reads VAQKIIPKAE…CEGYINPNRY (303 aa). ATP is bound at residue 179 to 186; that stretch reads GMGGIGKT. LRR repeat units lie at residues 534–555, 558–580, 582–604, 605–627, and 629–649; these read NLST…FFLF, KLVV…ISNL, SLQY…KKLR, KLIY…ATTL, and NLQV…IMEE.

Belongs to the disease resistance NB-LRR family.

Probable disease resistance protein. The polypeptide is Probable disease resistance protein At5g43730 (Arabidopsis thaliana (Mouse-ear cress)).